The chain runs to 1170 residues: Protein SCAR4 (1170 aa).

7 disordered regions span residues 180–207, 356–376, 631–674, 701–742, 783–819, 960–980, and 1026–1046; these read KLGK…EDSR, NDAD…SDDK, AAPK…PRDL, SYSG…NQTG, NQRQ…SSPL, EESK…SDTY, and HNNP…HPLE. The span at 183-195 shows a compositional bias: basic residues; that stretch reads KDKRLRQSKKKGS. The segment covering 198-207 has biased composition (basic and acidic residues); the sequence is TIKETPEDSR. A compositionally biased stretch (polar residues) spans 356-365; that stretch reads NDADSPASTE. Over residues 366–376 the composition is skewed to basic and acidic residues; it reads SEVKEAGSDDK. 4 stretches are compositionally biased toward polar residues: residues 640–668, 701–716, 783–818, and 967–980; these read SQDG…TLMS, SYSG…IVSD, NQRQ…QSSP, and EQSP…SDTY. In terms of domain architecture, WH2 spans 1105–1123; it reads ENDSLLEIIRSKSFNLRPA.

This sequence belongs to the SCAR/WAVE family. As to quaternary structure, interacts with SPK1. As to expression, expressed in expanding cotyledons, expanding leaves and expanding siliques containing developing embryos. Detected in unopened flower buds and in the expanding tip region of roots. Reduced expression in mature leaves.

The protein resides in the cytoplasm. It localises to the cytoskeleton. Its function is as follows. Involved in regulation of actin and microtubule organization. Part of a WAVE complex that activates the Arp2/3 complex. Regulates trichome branch positioning and expansion. This is Protein SCAR4 (SCAR4) from Arabidopsis thaliana (Mouse-ear cress).